The chain runs to 579 residues: Fatty-acid amide hydrolase 1 (579 aa).

Residues 9-29 form a helical membrane-spanning segment; sequence AFSGPSGVALACCLVAAALAL. Topologically, residues 30-403 are cytoplasmic; that stretch reads RWSSRRMARG…GDYVDSCLGD (374 aa). The active-site Charge relay system is K142. Substrate-binding positions include M191, S217, and 238–241; that span reads IGGS. Residue S217 is the Charge relay system of the active site. S241 acts as the Acyl-ester intermediate in catalysis. Position 241 is a phosphoserine (S241). An intramembrane segment occupies 404 to 433; that stretch reads LISILRLPKWLKGLLAFMLRPLLPRLAGFL. Residues 434-579 are Cytoplasmic-facing; the sequence is SSLRPRSAGK…RLMAPGRQPS (146 aa).

This sequence belongs to the amidase family. As to quaternary structure, homodimer.

Its subcellular location is the endoplasmic reticulum membrane. The protein localises to the golgi apparatus membrane. The enzyme catalyses N-(5Z,8Z,11Z,14Z-eicosatetraenoyl)-ethanolamine + H2O = ethanolamine + (5Z,8Z,11Z,14Z)-eicosatetraenoate. The catalysed reaction is (9Z)-octadecenamide + H2O = (9Z)-octadecenoate + NH4(+). It catalyses the reaction 2-(5Z,8Z,11Z,14Z-eicosatetraenoyl)-glycerol + H2O = glycerol + (5Z,8Z,11Z,14Z)-eicosatetraenoate + H(+). It carries out the reaction 1-O-methyl-(5Z,8Z,11Z,14Z)-eicosatetraenoate + H2O = methanol + (5Z,8Z,11Z,14Z)-eicosatetraenoate + H(+). The enzyme catalyses (9Z,12Z,15Z)-octadecatrienamide + H2O = (9Z,12Z,15Z)-octadecatrienoate + NH4(+). The catalysed reaction is (5Z,8Z,11Z,14Z)-eicosatetraenamide + H2O = (5Z,8Z,11Z,14Z)-eicosatetraenoate + NH4(+). It catalyses the reaction (6Z)-octadecenamide + H2O = (6Z)-octadecenoate + NH4(+). It carries out the reaction (15Z)-tetracosenamide + H2O = (15Z)-tetracosenoate + NH4(+). The enzyme catalyses (8Z,11Z,14Z)-eicosatrienamide + H2O = (8Z,11Z,14Z)-eicosatrienoate + NH4(+). The catalysed reaction is (11Z,14Z,17Z)-eicosatrienamide + H2O = (11Z,14Z,17Z)-eicosatrienoate + NH4(+). It catalyses the reaction (11Z,14Z)-eicosadienamide + H2O = (11Z,14Z)-eicosadienoate + NH4(+). It carries out the reaction (9Z,12Z)-octadecadienamide + H2O = (9Z,12Z)-octadecadienoate + NH4(+). The enzyme catalyses tetradecamide + H2O = tetradecanoate + NH4(+). The catalysed reaction is N-(9Z-octadecenoyl) ethanolamine + H2O = ethanolamine + (9Z)-octadecenoate. It catalyses the reaction N-(9Z-octadecenoyl)-taurine + H2O = taurine + (9Z)-octadecenoate. It carries out the reaction (11Z)-eicosenamide + H2O = (11Z)-eicosenoate + NH4(+). The enzyme catalyses N-(9Z-hexadecenoyl) ethanolamine + H2O = (9Z)-hexadecenoate + ethanolamine. The catalysed reaction is N-octadecanoyl ethanolamine + H2O = octadecanoate + ethanolamine. It catalyses the reaction N-docosanoyl-ethanolamine + H2O = docosanoate + ethanolamine. It carries out the reaction N-tetracosanoyl-taurine + H2O = tetracosanoate + taurine. The enzyme catalyses N-(15Z-tetracosenoyl)-ethanolamine + H2O = (15Z)-tetracosenoate + ethanolamine. The catalysed reaction is N-docosanoyl-taurine + H2O = docosanoate + taurine. It catalyses the reaction N-(15Z-tetracosenoyl)-taurine + H2O = (15Z)-tetracosenoate + taurine. It carries out the reaction N-tricosanoyl-taurine + H2O = tricosanoate + taurine. The enzyme catalyses (9Z)-octadecenoate + glycine = N-(9Z-octadecenoyl)glycine + H2O. The catalysed reaction is N-(5Z,8Z,11Z,14Z)-eicosatetraenoyl-glycine + H2O = (5Z,8Z,11Z,14Z)-eicosatetraenoate + glycine. It catalyses the reaction N-(5Z,8Z,11Z,14Z-eicosatetraenoyl)-L-serine + H2O = (5Z,8Z,11Z,14Z)-eicosatetraenoate + L-serine. With respect to regulation, inhibited by trifluoromethyl ketone. Catalyzes the hydrolysis of endogenous amidated lipids like the sleep-inducing lipid oleamide ((9Z)-octadecenamide), the endocannabinoid anandamide (N-(5Z,8Z,11Z,14Z-eicosatetraenoyl)-ethanolamine), as well as other fatty amides, to their corresponding fatty acids, thereby regulating the signaling functions of these molecules. Also catalyzes the hydrolysis of the endocannabinoid 2-arachidonoylglycerol (2-(5Z,8Z,11Z,14Z-eicosatetraenoyl)-glycerol). FAAH cooperates with PM20D1 in the hydrolysis of amino acid-conjugated fatty acids such as N-fatty acyl glycine and N-fatty acyl-L-serine, thereby acting as a physiological regulator of specific subsets of intracellular, but not of extracellular, N-fatty acyl amino acids. The sequence is that of Fatty-acid amide hydrolase 1 (FAAH) from Sus scrofa (Pig).